Consider the following 809-residue polypeptide: Cyclic nucleotide-gated channel beta-3 (809 aa).

2 disordered regions span residues 1-121 (MFKS…PPAA) and 153-178 (GDLSSPEASPQTAKPTAVPPVKESDD). Residues 1-218 (MFKSLTKVNK…SIDSYTDRLY (218 aa)) are Cytoplasmic-facing. A compositionally biased stretch (basic and acidic residues) spans 22-31 (QSSRRNEEGS). Residues 32-43 (HPSNQSQQTTAQ) are compositionally biased toward polar residues. Residues 44–53 (EENKGEEKSL) are compositionally biased toward basic and acidic residues. The segment covering 55 to 88 (TKSTPVTSEEPHTNIQDKLSKKNSSGDLTTNPDP) has biased composition (polar residues). The chain crosses the membrane as a helical span at residues 219–242 (LLWLLLVTLAYNWNCCFIPLRLVF). Over 243–249 (PYQTADN) the chain is Extracellular. Residues 250 to 270 (IHYWLIADIICDIIYLYDMLF) form a helical membrane-spanning segment. Residues 271 to 299 (IQPRLQFVRGGDIIVDSNELRKHYRTSTK) are Cytoplasmic-facing. A helical membrane pass occupies residues 300–317 (FQLDVASIIPFDICYLFF). At 318–320 (GFN) the chain is on the extracellular side. Residues 321–335 (PMFRANRMLKYTSFF) form a helical membrane-spanning segment. Residues 336–348 (EFNHHLESIMDKA) are Cytoplasmic-facing. An ion conduction pathway region spans residues 348–447 (AYIYRVIRTT…IGQMRDVIGA (100 aa)). Residues 349-371 (YIYRVIRTTGYLLFILHINACVY) form a helical membrane-spanning segment. At 372-393 (YWASNYEGIGTTRWVYDGEGNE) the chain is on the extracellular side. The next 2 membrane-spanning stretches (helical) occupy residues 394-420 (YLRCYYWAVRTLITIGGLPEPQTLFEI) and 421-445 (VFQLLNFFSGVFVFSSLIGQMRDVI). Positions 407–410 (TIGG) are selectivity filter. At 446–809 (GAATANQNYF…TIEVKEKAKQ (364 aa)) the chain is on the cytoplasmic side. Residues 450–526 (ANQNYFRACM…SIISKVDLFK (77 aa)) are C-linker. Positions 530–646 (TQMIYDMLLR…ILMKKARVLL (117 aa)) are cyclic nucleotide-binding domain. 3',5'-cyclic GMP-binding residues include Gly591, Glu592, Arg604, and Thr605. Positions 698-776 (QAAQKKENSE…PHSVRRTVLP (79 aa)) are disordered. Over residues 716–755 (NEDKQKENEDKQKENEDKGKENEDKDKGREPEEKPLDRPE) the composition is skewed to basic and acidic residues.

The protein belongs to the cyclic nucleotide-gated cation channel (TC 1.A.1.5) family. CNGB3 subfamily. Forms heterotetrameric channels composed of CNGA3 and CNGB3 subunits with 3:1 stoichiometry. Expressed specifically in the retina.

The protein localises to the cell membrane. The catalysed reaction is Ca(2+)(in) = Ca(2+)(out). The enzyme catalyses Na(+)(in) = Na(+)(out). It catalyses the reaction K(+)(in) = K(+)(out). It carries out the reaction NH4(+)(in) = NH4(+)(out). The catalysed reaction is Rb(+)(in) = Rb(+)(out). The enzyme catalyses Li(+)(in) = Li(+)(out). It catalyses the reaction Cs(+)(in) = Cs(+)(out). Functionally, pore-forming subunit of the cone cyclic nucleotide-gated channel. Mediates cone photoresponses at bright light converting transient changes in intracellular cGMP levels into electrical signals. In the dark, cGMP levels are high and keep the channel open enabling a steady inward current carried by Na(+) and Ca(2+) ions that leads to membrane depolarization and neurotransmitter release from synaptic terminals. Upon photon absorption cGMP levels decline leading to channel closure and membrane hyperpolarization that ultimately slows neurotransmitter release and signals the presence of light, the end point of the phototransduction cascade. Conducts cGMP- and cAMP-gated ion currents, with permeability for monovalent and divalent cations. The sequence is that of Cyclic nucleotide-gated channel beta-3 from Homo sapiens (Human).